The chain runs to 84 residues: Large ribosomal subunit protein bL27 (84 aa).

It belongs to the bacterial ribosomal protein bL27 family.

The chain is Large ribosomal subunit protein bL27 from Buchnera aphidicola subsp. Acyrthosiphon pisum (strain Tuc7).